A 457-amino-acid polypeptide reads, in one-letter code: D(1B) dopamine receptor (457 aa).

At 1–41 (MYQPFQHLDSDQVASWQSPEMLMNKSVSRESQRRKELVAGQ) the chain is on the extracellular side. The N-linked (GlcNAc...) asparagine glycan is linked to Asn24. Residues 42-67 (IVTGSLLLLLIFWTLFGNILVCTAVM) traverse the membrane as a helical segment. Over 68-78 (RFRHLRSRVTN) the chain is Cytoplasmic. The chain crosses the membrane as a helical span at residues 79 to 105 (IFIVSLAVSDLLVALLVMPWKAVAEVA). Residues 106-114 (GHWPFGAFC) lie on the Extracellular side of the membrane. A disulfide bridge links Cys114 with Cys199. The chain crosses the membrane as a helical span at residues 115-137 (DIWVAFDIMCSTASILNLCVISV). Topologically, residues 138-156 (DRYWAISSPFRYERKMTQR) are cytoplasmic. Residues 157-181 (VALLMISTAWALSVLISFIPVQLSW) form a helical membrane-spanning segment. Residues 182–205 (HKSETEDHLLSNHSTGNCDSSLNR) lie on the Extracellular side of the membrane. A helical membrane pass occupies residues 206–231 (TYAISSSLISFYIPVAIMIVTYTRIY). Topologically, residues 232 to 282 (RIAQIQIKRISTLERAAEHAQSCRSNRVDSCSRHHQTSLRTSIKKETKVLK) are cytoplasmic. A helical membrane pass occupies residues 283 to 309 (TLSIIMGVFVCCWLPFFILNCMVPFCD). Topologically, residues 310–326 (RSPGHPQAGLPCVSETT) are extracellular. Residues 327-351 (FDIFVWFGWANSSLNPIIYAFNADF) form a helical membrane-spanning segment. Topologically, residues 352 to 457 (RKVFSSLLGC…ITPSMSNGIH (106 aa)) are cytoplasmic. Cys361 is lipidated: S-palmitoyl cysteine.

The protein belongs to the G-protein coupled receptor 1 family. As to expression, brain and kidney.

Its subcellular location is the cell membrane. In terms of biological role, dopamine receptor whose activity is mediated by G proteins which activate adenylyl cyclase. The polypeptide is D(1B) dopamine receptor (drd5) (Xenopus laevis (African clawed frog)).